We begin with the raw amino-acid sequence, 205 residues long: Heat shock protein beta-1 (205 aa).

Arginine 12 carries the omega-N-methylarginine modification. Serine 15 bears the Phosphoserine; by MAPKAPK2 and MAPKAPK3 mark. Phosphoserine is present on residues serine 26 and serine 65. The tract at residues 70-205 is interaction with TGFB1I1; the sequence is APAYSRALSR…AAKSDETAAK (136 aa). The sHSP domain occupies 76 to 184; that stretch reads ALSRQLSSGV…QSNEITIPVT (109 aa). 2 positions are modified to phosphoserine; by MAPKAPK2, MAPKAPK3 and MAPKAPK5: serine 78 and serine 82. A phosphoserine mark is found at serine 83, serine 86, and serine 98. Lysine 123 carries the post-translational modification N6-acetyllysine. Threonine 174 carries the phosphothreonine modification. Serine 176 and serine 199 each carry phosphoserine.

This sequence belongs to the small heat shock protein (HSP20) family. As to quaternary structure, homooligomer. Homodimer; becomes monomeric upon activation. Heterooligomer; with HSPB6. Associates with alpha- and beta-tubulin. Interacts with TGFB1I1. Interacts with CRYAB. Interacts with HSPB8. Interacts with HSPBAP1. In terms of processing, phosphorylated upon exposure to protein kinase C activators and heat shock. Phosphorylation by MAPKAPK2 and MAPKAPK3 in response to stress dissociates HSPB1 from large small heat-shock protein (sHsps) oligomers and impairs its chaperone activity and ability to protect against oxidative stress effectively. Phosphorylation by MAPKAPK5 in response to PKA stimulation induces F-actin rearrangement. Detected in all tissues tested: skeletal muscle, heart, aorta, large intestine, small intestine, stomach, esophagus, bladder, adrenal gland, thyroid, pancreas, testis, adipose tissue, kidney, liver, spleen, cerebral cortex, blood serum and cerebrospinal fluid. Highest levels are found in the heart and in tissues composed of striated and smooth muscle.

The protein localises to the cytoplasm. It localises to the nucleus. The protein resides in the cytoskeleton. It is found in the spindle. Its function is as follows. Small heat shock protein which functions as a molecular chaperone probably maintaining denatured proteins in a folding-competent state. Plays a role in stress resistance and actin organization. Through its molecular chaperone activity may regulate numerous biological processes including the phosphorylation and the axonal transport of neurofilament proteins. This chain is Heat shock protein beta-1 (HSPB1), found in Homo sapiens (Human).